Here is a 449-residue protein sequence, read N- to C-terminus: MVDASQYLSVTALTQYLKRKFDADPYLAKVYLTGEISNYRKRVGNQYFSLKDDHAKIGALMFRNAFSKVQFDLEEGMKVLVVGRVSLYEPSGEYRLIVEHLEPDGVGALYQAFEQLKKKLAAEGLFDRNQRPLPLFPKRVAVVTSPSGAVIQDIMTTVARRYPILQLTLFPAVVQGDQAADSLVKRLNQIKTIGGFDAVIIGRGGGSIEDLWPFNEEKVARALVDMPMPVVSSVGHETDTTITDFIADRRAATPTAAAEIVTPVTLIDALNRISEDRVRLVNAMHNRLKNAAIRVQRSAQSVVLTQPDRLYDQYVQRVDQFQQRLQQSMHNRLRDADHRLAMATSQLDGRQLFIRLVNLQRQVTGDRHRLDQAMRGLVKTKRQAFASAVSGLDHLSPLKILGRGFAYVTDKQGQMLKSLSDYELDQDIHIHVADGQVGAHVTTKEKTHG.

The protein belongs to the XseA family. As to quaternary structure, heterooligomer composed of large and small subunits.

The protein resides in the cytoplasm. The enzyme catalyses Exonucleolytic cleavage in either 5'- to 3'- or 3'- to 5'-direction to yield nucleoside 5'-phosphates.. In terms of biological role, bidirectionally degrades single-stranded DNA into large acid-insoluble oligonucleotides, which are then degraded further into small acid-soluble oligonucleotides. The chain is Exodeoxyribonuclease 7 large subunit from Lacticaseibacillus paracasei (strain ATCC 334 / BCRC 17002 / CCUG 31169 / CIP 107868 / KCTC 3260 / NRRL B-441) (Lactobacillus paracasei).